The following is a 660-amino-acid chain: Long chain acyl-CoA synthetase 1 (660 aa).

An ATP-binding site is contributed by 225-236; it reads IMYTSGTSGDPK. The segment at 492-516 is fatty acid-binding; sequence DGWFHTGDIGEILPNGVLKIIDRKK.

Belongs to the ATP-dependent AMP-binding enzyme family. It depends on Mg(2+) as a cofactor. In terms of tissue distribution, epidermal-specific expression along the entire stem. In cauline leaves, was expressed over the entire leaf surface, most strongly in trichomes and guard cells, but not in mesophyll cells. In flowers, the expression was detected in the stigma and filaments of the stamens, and in the carpel was expressed specifically in ovaries. In roots, was expressed in primary and lateral roots, but not in the root tips.

The protein localises to the endoplasmic reticulum. The enzyme catalyses a long-chain fatty acid + ATP + CoA = a long-chain fatty acyl-CoA + AMP + diphosphate. Its pathway is lipid metabolism; fatty acid metabolism. Its function is as follows. Activation of long-chain fatty acids for both synthesis of cellular lipids, and degradation via beta-oxidation. Acts in both the wax and cutin pathways. Preferentially uses palmitate, palmitoleate, linoleate and eicosenoate. Seems to have a specific activity against very long-chain fatty acid (VLCFA) class with acids longer than 24 carbons (C(24)). The chain is Long chain acyl-CoA synthetase 1 (LACS1) from Arabidopsis thaliana (Mouse-ear cress).